An 88-amino-acid chain; its full sequence is UPF0297 protein GK2555 (88 aa).

The protein belongs to the UPF0297 family.

This is UPF0297 protein GK2555 from Geobacillus kaustophilus (strain HTA426).